A 261-amino-acid polypeptide reads, in one-letter code: (S)-ureidoglycine aminohydrolase (261 aa).

The 47-residue stretch at 184-230 (LSFAPGASHGYIETHVQEHGAYILSGQGVYNLDNNWIPVKKGDYIFM) folds into the Cupin type-2 domain. Residues Glu196, His198, His202, and Gln236 each contribute to the Mn(2+) site. Residue Glu196 coordinates substrate. Positions 236, 249, and 253 each coordinate substrate.

This sequence belongs to the UGHY family. In terms of assembly, monomer. The cofactor is Mn(2+).

Its subcellular location is the cytoplasm. It catalyses the reaction (S)-2-ureidoglycine + H2O = (S)-ureidoglycolate + NH4(+). Functionally, involved in the anaerobic nitrogen utilization via the assimilation of allantoin. Catalyzes the second stereospecific hydrolysis reaction (deamination) of the allantoin degradation pathway, producing S-ureidoglycolate and ammonia from S-ureidoglycine. The polypeptide is (S)-ureidoglycine aminohydrolase (allE) (Escherichia coli (strain K12)).